The sequence spans 301 residues: Ribosomal RNA small subunit methyltransferase H (301 aa).

S-adenosyl-L-methionine-binding positions include 25–27 (GGH), Asp45, Phe72, Asp94, and Gln101.

The protein belongs to the methyltransferase superfamily. RsmH family.

It localises to the cytoplasm. The enzyme catalyses cytidine(1402) in 16S rRNA + S-adenosyl-L-methionine = N(4)-methylcytidine(1402) in 16S rRNA + S-adenosyl-L-homocysteine + H(+). Its function is as follows. Specifically methylates the N4 position of cytidine in position 1402 (C1402) of 16S rRNA. This chain is Ribosomal RNA small subunit methyltransferase H, found in Methylococcus capsulatus (strain ATCC 33009 / NCIMB 11132 / Bath).